The sequence spans 769 residues: MAQWNQLQQLDTRYLEQLHQLYSDSFPMELRQFLAPWIESQDWAFAASKESHATLVFHNLLGEIDQQYSRFLQESNVLYQHNLRRIKQFLQSRYLEKPMEIARIVARCLWEEGRLLQTAAAAAQQGGPASHPNAAVVTEKQQMLEQHLQDVRKKVQDLEQKMKVVENLQDDFDFNYKTLKSQSDLSELNGNNQSVTRQKMQQLEQMLTALDQLRRTIISDLASLLSAMEYVQKTLTDEELADWKRRQQIACIGGPPNICLDRLENWITSLAESQLQIRQQIKKLEELQQKVSYKGDPIVQHRPMLEERIVELFRNLMKSAFVVERQPCMPMHPDRPLVIKTGVQFTNKVRLLVKFPELNYQLKIKVCIDKDSGDVAALRGSRKFNILGTNTKVMNMEESNNGSLSAEFKHLTLREQRCGNGGRANCDASLIVTEELHLITFETEVYHQGLKIDLETHSLPVVVISNICQMPNAWASILWYNMLTNNPKNVNFFTKPPIGTWDQVAEVLSWQFSSTTKRGLSIEQLTTLAEKLLGPGVNYSGCQITWAKFCKENMAGKGFSFWVWLDNIIDLVKKYILALWNEGYIMGFISKERERAILSTKPPGTFLLRFSESSKEGGITFTWVEKDISGKTQIQSVEPYTKQQLNNMSFAEIIMGYKIMDATNILVSPLVYLYPDIPKEEAFGKYCRPESQEHQEPTDPGSTAPYLKTKFICVTPTTCSSTLDLPMSPRTLDSLMQFPGEGADSSAGNQFETLTFDMELTSECASSPM.

The short motif at 150–162 (DVRKKVQDLEQKM) is the Essential for nuclear import element. The SH2 domain maps to 580–670 (WNEGYIMGFI…DATNILVSPL (91 aa)). Position 728 is a phosphoserine; by NLK (Ser728).

The protein belongs to the transcription factor STAT family. In terms of assembly, forms a homodimer or a heterodimer with a related family member, such as stat1. Interacts with nlk.2. Phosphorylation of both tyrosine and serine residues, together with dimerization, is required for mesoderm induction.

The protein localises to the cytoplasm. It is found in the nucleus. Functionally, transcription factor that binds to target promoter sequences and activates transcription upon il6st/gp130 stimulation. Mediates ventralization of embryos, at least in part via inhibition of smad2 signaling. Required for hairy2 to induce dll1/delta1 and promote neural crest cell proliferation and differentiation. Involved in TGFbeta-mediated mesoderm induction in early embryos, acting downstream of map3k7/tak1 and nlk.2. In Xenopus laevis (African clawed frog), this protein is Signal transducer and activator of transcription 3.1 (stat3.1).